A 207-amino-acid chain; its full sequence is Urease accessory protein UreG (207 aa).

12 to 19 (GPVGAGKT) contributes to the GTP binding site.

Belongs to the SIMIBI class G3E GTPase family. UreG subfamily. In terms of assembly, homodimer. UreD, UreF and UreG form a complex that acts as a GTP-hydrolysis-dependent molecular chaperone, activating the urease apoprotein by helping to assemble the nickel containing metallocenter of UreC. The UreE protein probably delivers the nickel.

The protein resides in the cytoplasm. Facilitates the functional incorporation of the urease nickel metallocenter. This process requires GTP hydrolysis, probably effectuated by UreG. The chain is Urease accessory protein UreG from Cereibacter sphaeroides (strain ATCC 17025 / ATH 2.4.3) (Rhodobacter sphaeroides).